A 158-amino-acid polypeptide reads, in one-letter code: Transcription elongation factor GreA (158 aa).

Belongs to the GreA/GreB family.

Its function is as follows. Necessary for efficient RNA polymerase transcription elongation past template-encoded arresting sites. The arresting sites in DNA have the property of trapping a certain fraction of elongating RNA polymerases that pass through, resulting in locked ternary complexes. Cleavage of the nascent transcript by cleavage factors such as GreA or GreB allows the resumption of elongation from the new 3'terminus. GreA releases sequences of 2 to 3 nucleotides. This is Transcription elongation factor GreA from Hamiltonella defensa subsp. Acyrthosiphon pisum (strain 5AT).